We begin with the raw amino-acid sequence, 1249 residues long: Voltage-dependent calcium channel unc-36 (1249 aa).

A signal peptide spans 1-19 (MRVVHLLVVLATYVSTTSS). At 20-1228 (FNKESIKECA…SENERRPCST (1209 aa)) the chain is on the extracellular side. Asparagine 100, asparagine 140, asparagine 146, asparagine 302, asparagine 520, asparagine 558, asparagine 757, asparagine 838, asparagine 903, asparagine 923, and asparagine 1130 each carry an N-linked (GlcNAc...) asparagine glycan. The VWFA domain occupies 250–479 (NVLIMLDMSG…EKIHHYIRRM (230 aa)). A helical transmembrane segment spans residues 1229–1248 (SPTIVSIFQILFGVFLHFCI). A topological domain (cytoplasmic) is located at residue phenylalanine 1249.

In terms of tissue distribution, decendants of the cells AB and AB.p (that give rise to nearly all non-pharyngeal neurons), decendants of P1 (that give rise to body muscle) and cell lineages that give rise to the adult and juvenile motor neurons. Expressed in body wall, vulval muscle and pharyngeal muscle.

It localises to the membrane. In terms of biological role, may act as an auxiliary subunit of the unc-2 voltage-gated calcium channel which appears to trigger calcium-activated signaling pathways that control the serotonin response. Inhibiting serotonin sensitivity of the vulval muscles results in egg laying defects. May act in both neurons and muscle cells to enhance motor activity as it is required for coordinated movement. Has a role in neural depolarization-induced calcium influx and pharyngeal pumping. Involved in restricting the expression of the putative olfactory receptor str-2 to only one of the two AWC neurons. This chain is Voltage-dependent calcium channel unc-36 (unc-36), found in Caenorhabditis elegans.